The primary structure comprises 34 residues: Surfactant protein C (34 aa).

Cys4 carries the S-palmitoyl cysteine lipid modification.

The protein localises to the secreted. It localises to the extracellular space. Its subcellular location is the surface film. Pulmonary surfactant associated proteins promote alveolar stability by lowering the surface tension at the air-liquid interface in the peripheral air spaces. The polypeptide is Surfactant protein C (SFTPC) (Canis lupus familiaris (Dog)).